The sequence spans 350 residues: tRNA uridine(34) hydroxylase (350 aa).

The Rhodanese domain occupies 146–240; the sequence is DDPDAVFIDM…YARRARAQGL (95 aa). Cys-200 serves as the catalytic Cysteine persulfide intermediate. Basic and acidic residues predominate over residues 319 to 328; the sequence is RRRRAGRENG. A disordered region spans residues 319–350; the sequence is RRRRAGRENGNKIFNKSRGRLNSKLSIPDPAE.

It belongs to the TrhO family.

It catalyses the reaction uridine(34) in tRNA + AH2 + O2 = 5-hydroxyuridine(34) in tRNA + A + H2O. In terms of biological role, catalyzes oxygen-dependent 5-hydroxyuridine (ho5U) modification at position 34 in tRNAs. The polypeptide is tRNA uridine(34) hydroxylase (Salmonella paratyphi B (strain ATCC BAA-1250 / SPB7)).